Here is a 196-residue protein sequence, read N- to C-terminus: Carnitine operon protein CaiE (196 aa).

Positions 174 to 196 (QPLRQMEENRPRLQGTTDVTPKR) are disordered. Residues 187 to 196 (QGTTDVTPKR) show a composition bias toward polar residues.

The protein belongs to the transferase hexapeptide repeat family.

It participates in amine and polyamine metabolism; carnitine metabolism. Its function is as follows. Overproduction of CaiE stimulates the activity of CaiB and CaiD. The protein is Carnitine operon protein CaiE (caiE) of Escherichia coli (strain K12).